A 425-amino-acid polypeptide reads, in one-letter code: Pectate lyase L (425 aa).

A signal peptide spans 1–25; sequence MKYLNCFISTGLAAFFLVNSTSVLA. A disulfide bond links cysteine 28 and cysteine 114. Aspartate 209, aspartate 233, aspartate 234, and aspartate 237 together coordinate Ca(2+). Residue lysine 273 is the Proton acceptor of the active site. 5 residues coordinate Ca(2+): asparagine 402, serine 413, alanine 416, aspartate 418, and glutamate 423.

It belongs to the polysaccharide lyase 9 family. It depends on Ca(2+) as a cofactor.

It is found in the secreted. It catalyses the reaction Eliminative cleavage of (1-&gt;4)-alpha-D-galacturonan to give oligosaccharides with 4-deoxy-alpha-D-galact-4-enuronosyl groups at their non-reducing ends.. It functions in the pathway glycan metabolism; pectin degradation; 2-dehydro-3-deoxy-D-gluconate from pectin: step 2/5. Functionally, presents an endo-cleaving activity on polygalacturonate or partially methylated pectin. Is effective in the maceration of plant tissue, and has an important role in soft-rot disease. Is 280-fold less active against polygalacturonate than the major pectate lyase PelB. When assayed on polygalacturonate, PelL releases oligogalacturonates of different sizes; upon prolonged incubation, PelL degrades the primary products to unsaturated tetramer and pentamer in addition to unsaturated dimer and trimer. When assayed on oligogalacturonates (degrees of polymerization of 2 to 8), it preferentially forms unsaturated tetramer, and displays the highest activity on the octamer. This chain is Pectate lyase L (pelL), found in Dickeya dadantii (strain 3937) (Erwinia chrysanthemi (strain 3937)).